The following is an 828-amino-acid chain: Calpain-A (828 aa).

One can recognise an EF-hand 1 domain in the interval 1–14 (MDDLRGFLRQAGQE). The 300-residue stretch at 88–387 (LFEDPLFPAS…FDRVEICNLS (300 aa)) folds into the Calpain catalytic domain. Residues C143, H299, and N327 contribute to the active site. Residues 388–557 (PDSLTEDQQN…TQNNMEENDD (170 aa)) are domain III. The linker stretch occupies residues 558–577 (HVGYGGKADTITPGFPTPKP). Positions 578–828 (IDPQKEGLRR…EEWIERTIYS (251 aa)) are domain IV. 4 EF-hand domains span residues 579 to 614 (DPQK…SMRD), 699 to 734 (FSKD…IAKW), 729 to 764 (SEIA…AGYH), and 764 to 799 (HLNN…IKTY). Positions 712, 714, 716, 718, 723, 742, 746, 748, and 753 each coordinate Ca(2+).

Belongs to the peptidase C2 family. Post-translationally, undergoes calcium-dependent autolytic cleavage between Lys-54 and Asn-55, which is necessary for activation of the protein. Localized to the anterior and posterior embryonic poles just after fertilization. Becomes distributed around the polar buds and just below the pole cells of the posterior pole during cleavage cycles. During these nuclear divisions anterior localization disappears. Localized to actin caps that underlie the plasma membrane, immediately above each nucleus at cleavage cycles 8 and 9. Localized to a small set of nerve, midgut and blood cells in adults.

It localises to the cytoplasm. Its activity is regulated as follows. Activated by millimolar concentrations of calcium, and by phosphatidylinositol 4,5-diphosphate, phosphatidylinositol 4-monophosphate, phosphatidylinositol and phosphatidic acid. In terms of biological role, calcium-regulated non-lysosomal thiol-protease. Involved in the organization of the actin-related cytoskeleton during embryogenesis. This is Calpain-A (CalpA) from Drosophila melanogaster (Fruit fly).